We begin with the raw amino-acid sequence, 255 residues long: Malonyl-[acyl-carrier protein] O-methyltransferase (255 aa).

It belongs to the methyltransferase superfamily.

It carries out the reaction malonyl-[ACP] + S-adenosyl-L-methionine = malonyl-[ACP] methyl ester + S-adenosyl-L-homocysteine. The protein operates within cofactor biosynthesis; biotin biosynthesis. Functionally, converts the free carboxyl group of a malonyl-thioester to its methyl ester by transfer of a methyl group from S-adenosyl-L-methionine (SAM). It allows to synthesize pimeloyl-ACP via the fatty acid synthetic pathway. The chain is Malonyl-[acyl-carrier protein] O-methyltransferase from Serratia marcescens.